The sequence spans 442 residues: Trigger factor (442 aa).

The PPIase FKBP-type domain occupies 175-258 (GDFISISLHV…VNAVIEVSIP (84 aa)).

This sequence belongs to the FKBP-type PPIase family. Tig subfamily.

The protein localises to the cytoplasm. It catalyses the reaction [protein]-peptidylproline (omega=180) = [protein]-peptidylproline (omega=0). In terms of biological role, involved in protein export. Acts as a chaperone by maintaining the newly synthesized protein in an open conformation. Functions as a peptidyl-prolyl cis-trans isomerase. In Chlamydia pneumoniae (Chlamydophila pneumoniae), this protein is Trigger factor (tig).